Reading from the N-terminus, the 91-residue chain is Large ribosomal subunit protein uL23c (91 aa).

It belongs to the universal ribosomal protein uL23 family. In terms of assembly, part of the 50S ribosomal subunit.

The protein resides in the plastid. It is found in the chloroplast. Its function is as follows. Binds to 23S rRNA. The polypeptide is Large ribosomal subunit protein uL23c (rpl23) (Marchantia polymorpha (Common liverwort)).